A 278-amino-acid polypeptide reads, in one-letter code: MKLCFNEATTLENSNLKLDLELCEKHGYDYIEIRTMDKLPEYLKDHSLDDLAEYFQTHHIKPLALNALVFFNNRDEKGHNEIITEFKGMMETCKTLGVKYVVAVPLVTEQKIVKEEIKKSSVDVLTELSDIAEPYGVKIALEFVGHPQCTVNTFEQAYEIVNTVNRDNVGLVLDSFHFHAMGSNIESLKQADGKKIFIYHIDDTEDFPIGFLTDEDRVWPGQGAIDLDAHLSALKEIGFSDVVSVELFRPEYYKLTAEEAIQTAKKTTVDVVSKYFSM.

4 residues coordinate a divalent metal cation: Glu142, Asp174, His200, and Glu246.

Belongs to the IolI family. The cofactor is Mn(2+). Fe(2+) is required as a cofactor. Requires Co(2+) as cofactor.

The enzyme catalyses scyllo-inosose = scyllo-inosine. It functions in the pathway polyol metabolism; myo-inositol degradation into acetyl-CoA. Its function is as follows. Involved in the reversible interconverion of 2-keto-myo-inositol (2KMI, inosose or 2,4,6/3,5-pentahydroxycyclohexanone) to 1-keto-D-chiro-inositol (1KDCI or 2,3,5/4,6-pentahydroxycyclohexanone). The polypeptide is Inosose isomerase (iolI) (Bacillus subtilis (strain 168)).